The primary structure comprises 757 residues: MDVNPTLLFLKVPAQNAISTTFPYTGDPPYSHGTGTGYTMDTVNRTHQYSEKGRWTTNTETGAPQLNPIDGPLPEDNEPSGYAQTDCVLEAMAFLEESHPGIFENSCIETMEVVQQTRVDKLTQGRQTYDWTLNRNQPAATALANTIEVFRSNGLTANESGRLIDFLKDVMESMNKEEMGITTHFQRKRRVRDNMTKKMITQRTMGKKKQRLNKRSYLIRALTLNTMTKDAERGKLKRRAIATPGMQIRGFVYFVETLARSICEKLEQSGLPVGGNEKKAKLANVVRKMMTNSQDTELSFTITGDNTKWNENQNPRMFLAMITYMTRNQPEWFRNVLSIAPIMFSNKMARLGKGYMFESKSMKLRTQIPAEMLASIDLKYFNDSTRKKIEKIRPLLIEGTASLSPGMMMGMFNMLSTVLGVSILNLGQKRYTKTTYWWDGLQSSDDFALIVNAPNHEGIQAGVDRFYRTCKLLGINMSKKKSYINRTGTFEFTSFFYRYGFVANFSMELPSFGVSGINESADMSIGVTVIKNNMINNDLGPATAQMALQLFIKDYRYTYRCHRGDTQIQTRRSFEIKKLWEQTRSKAGLLVSDGGPNLYNIRNLHIPEVCLKWELMDEDYQGRLCNPLNPFVSHKEIESMNNAVMMPAHGPAKNMEYDAVATTHSWIPKRNRSILNTSQRGVLEDEQMYQRCCNLFEKFFPSSSYRRPVGISSMVEAMVSRARIDTRIDFESGRIKKEEFTEIMKICSTIEELRRQK.

Residues 53-82 form a disordered region; sequence GRWTTNTETGAPQLNPIDGPLPEDNEPSGY. Residues 55-64 show a composition bias toward polar residues; sequence WTTNTETGAP. Short sequence motifs (nuclear localization signal) lie at residues 187–195 and 203–216; these read RKRRVRDNM and RTMG…NKRS. The promoter-binding site stretch occupies residues 249 to 256; that stretch reads RGFVYFVE. One can recognise a RdRp catalytic domain in the interval 286–483; it reads VRKMMTNSQD…GINMSKKKSY (198 aa).

It belongs to the influenza viruses polymerase PB1 family. In terms of assembly, influenza RNA polymerase is composed of three subunits: PB1, PB2 and PA. Interacts (via N-terminus) with PA (via C-terminus). Interacts (via C-terminus) with PB2 (via N-terminus); this interaction is essential for transcription initiation. Interacts (via C-terminus) with human PKP2 (via N-terminus); the interaction competitively inhibits the interaction between the RNA polymerase subunits PB1 and PB2. In terms of processing, phosphorylated by host PRKCA.

The protein localises to the host nucleus. It is found in the host cytoplasm. It carries out the reaction RNA(n) + a ribonucleoside 5'-triphosphate = RNA(n+1) + diphosphate. Its function is as follows. RNA-dependent RNA polymerase which is responsible for replication and transcription of virus RNA segments. The transcription of viral mRNAs occurs by a unique mechanism called cap-snatching. 5' methylated caps of cellular mRNAs are cleaved after 10-13 nucleotides by PA. In turn, these short capped RNAs are used as primers by PB1 for transcription of viral mRNAs. During virus replication, PB1 initiates RNA synthesis and copy vRNA into complementary RNA (cRNA) which in turn serves as a template for the production of more vRNAs. This Influenza A virus (strain A/Russia:St.Petersburg/8/2006 H1N1) protein is RNA-directed RNA polymerase catalytic subunit.